The sequence spans 159 residues: 2-C-methyl-D-erythritol 2,4-cyclodiphosphate synthase (159 aa).

2 residues coordinate a divalent metal cation: aspartate 8 and histidine 10. 4-CDP-2-C-methyl-D-erythritol 2-phosphate-binding positions include 8-10 and 34-35; these read DVH and HS. Histidine 42 lines the a divalent metal cation pocket. 4-CDP-2-C-methyl-D-erythritol 2-phosphate contacts are provided by residues 56 to 58, 61 to 65, 132 to 135, phenylalanine 139, and arginine 142; these read DIG, FPDTD, and TTTE.

It belongs to the IspF family. In terms of assembly, homotrimer. A divalent metal cation serves as cofactor.

The catalysed reaction is 4-CDP-2-C-methyl-D-erythritol 2-phosphate = 2-C-methyl-D-erythritol 2,4-cyclic diphosphate + CMP. The protein operates within isoprenoid biosynthesis; isopentenyl diphosphate biosynthesis via DXP pathway; isopentenyl diphosphate from 1-deoxy-D-xylulose 5-phosphate: step 4/6. Functionally, involved in the biosynthesis of isopentenyl diphosphate (IPP) and dimethylallyl diphosphate (DMAPP), two major building blocks of isoprenoid compounds. Catalyzes the conversion of 4-diphosphocytidyl-2-C-methyl-D-erythritol 2-phosphate (CDP-ME2P) to 2-C-methyl-D-erythritol 2,4-cyclodiphosphate (ME-CPP) with a corresponding release of cytidine 5-monophosphate (CMP). This is 2-C-methyl-D-erythritol 2,4-cyclodiphosphate synthase from Finegoldia magna (strain ATCC 29328 / DSM 20472 / WAL 2508) (Peptostreptococcus magnus).